The primary structure comprises 430 residues: Adenylosuccinate synthetase (430 aa).

GTP contacts are provided by residues 12-18 (GDEGKGK) and 40-42 (GHT). The Proton acceptor role is filled by D13. Mg(2+)-binding residues include D13 and G40. Residues 13–16 (DEGK), 38–41 (NAGH), T130, R144, Q224, T239, and R303 contribute to the IMP site. H41 functions as the Proton donor in the catalytic mechanism. 299–305 (TVTSRKR) contributes to the substrate binding site. GTP is bound by residues R305, 331–333 (KLD), and 413–415 (STS).

It belongs to the adenylosuccinate synthetase family. As to quaternary structure, homodimer. The cofactor is Mg(2+).

It is found in the cytoplasm. It catalyses the reaction IMP + L-aspartate + GTP = N(6)-(1,2-dicarboxyethyl)-AMP + GDP + phosphate + 2 H(+). It participates in purine metabolism; AMP biosynthesis via de novo pathway; AMP from IMP: step 1/2. In terms of biological role, plays an important role in the de novo pathway of purine nucleotide biosynthesis. Catalyzes the first committed step in the biosynthesis of AMP from IMP. In Pelagibacter ubique (strain HTCC1062), this protein is Adenylosuccinate synthetase.